A 219-amino-acid polypeptide reads, in one-letter code: MDKRIIVALDVKEKKKAIDIAESLSDIVFAFKINWPLVLYSSPEVIGEISQYGKVICDFKVADIPYTNSLITERVRDLGAWGIISHSFLGEESLKSVVNAAKGMHVFSVVAMSHPGSDMINSNAMQLMKLSIECGVYGFVAPANKIDDLRMIRSATDRVIISPGIGAQGGDPYTAVLNGSDYLIVGRSVYESDKPELEVSKLQQTAERAIEDRERLKNS.

Residues D10, K32, 58–67, S113, 163–173, G186, and R187 each bind substrate; these read DFKVADIPYT and PGIGAQGGDPY. K60 functions as the Proton donor in the catalytic mechanism.

This sequence belongs to the OMP decarboxylase family. Type 1 subfamily. Homodimer.

The enzyme catalyses orotidine 5'-phosphate + H(+) = UMP + CO2. It participates in pyrimidine metabolism; UMP biosynthesis via de novo pathway; UMP from orotate: step 2/2. Its function is as follows. Catalyzes the decarboxylation of orotidine 5'-monophosphate (OMP) to uridine 5'-monophosphate (UMP). The sequence is that of Orotidine 5'-phosphate decarboxylase from Thermoplasma volcanium (strain ATCC 51530 / DSM 4299 / JCM 9571 / NBRC 15438 / GSS1).